The primary structure comprises 182 residues: ATP-dependent protease subunit HslV (182 aa).

Thr10 is a catalytic residue. Na(+)-binding residues include Ala166, Cys169, and Ser172.

Belongs to the peptidase T1B family. HslV subfamily. As to quaternary structure, a double ring-shaped homohexamer of HslV is capped on each side by a ring-shaped HslU homohexamer. The assembly of the HslU/HslV complex is dependent on binding of ATP.

Its subcellular location is the cytoplasm. It catalyses the reaction ATP-dependent cleavage of peptide bonds with broad specificity.. With respect to regulation, allosterically activated by HslU binding. Its function is as follows. Protease subunit of a proteasome-like degradation complex believed to be a general protein degrading machinery. The sequence is that of ATP-dependent protease subunit HslV from Rickettsia prowazekii (strain Madrid E).